Here is a 128-residue protein sequence, read N- to C-terminus: Azurin (128 aa).

A Plastocyanin-like domain is found at 1–128; that stretch reads AECSVDIQGN…ALMKGTLTLK (128 aa). Residues Cys-3 and Cys-26 are joined by a disulfide bond. The Cu cation site is built by His-46, Cys-112, His-117, and Met-121.

Its subcellular location is the periplasm. Functionally, transfers electrons from cytochrome c551 to cytochrome oxidase. The protein is Azurin of Pseudomonas aeruginosa.